Consider the following 63-residue polypeptide: Ct-IT2 (63 aa).

The LCN-type CS-alpha/beta domain occupies 1 to 63; that stretch reads KDGYPMDSKG…VWDKATNKCG (63 aa). Disulfide bonds link Cys-11/Cys-62, Cys-15/Cys-36, Cys-22/Cys-43, and Cys-26/Cys-45. Residue Gly-63 is modified to Glycine amide.

As to expression, expressed by the venom gland.

It localises to the secreted. Its function is as follows. Beta toxins bind voltage-independently at site-4 of sodium channels (Nav) and shift the voltage of activation toward more negative potentials thereby affecting sodium channel activation and promoting spontaneous and repetitive firing. Is highly active on insects, since it provokes paralysis and death when injected into crickets. The polypeptide is Ct-IT2 (Centruroides tecomanus (Scorpion)).